Here is a 172-residue protein sequence, read N- to C-terminus: Cell division protein SepF (172 aa).

The segment at D16–S78 is disordered. Over residues G17–E48 the composition is skewed to basic and acidic residues.

This sequence belongs to the SepF family. In terms of assembly, homodimer. Interacts with FtsZ.

It localises to the cytoplasm. Cell division protein that is part of the divisome complex and is recruited early to the Z-ring. Probably stimulates Z-ring formation, perhaps through the cross-linking of FtsZ protofilaments. Its function overlaps with FtsA. This is Cell division protein SepF from Renibacterium salmoninarum (strain ATCC 33209 / DSM 20767 / JCM 11484 / NBRC 15589 / NCIMB 2235).